The chain runs to 321 residues: Probable arabinan endo-1,5-alpha-L-arabinosidase A (321 aa).

The N-terminal stretch at 1–19 (MSASAFVAVASCLAALVHG) is a signal peptide. Asp34 functions as the Proton acceptor in the catalytic mechanism. Glu200 functions as the Proton donor in the catalytic mechanism.

The protein belongs to the glycosyl hydrolase 43 family.

Its subcellular location is the secreted. It catalyses the reaction Endohydrolysis of (1-&gt;5)-alpha-arabinofuranosidic linkages in (1-&gt;5)-arabinans.. Its pathway is glycan metabolism; L-arabinan degradation. In terms of biological role, endo-1,5-alpha-L-arabinanase involved in degradation of pectin. Its preferred substrate is linear 1,5-alpha-L-arabinan. In Neosartorya fischeri (strain ATCC 1020 / DSM 3700 / CBS 544.65 / FGSC A1164 / JCM 1740 / NRRL 181 / WB 181) (Aspergillus fischerianus), this protein is Probable arabinan endo-1,5-alpha-L-arabinosidase A (abnA).